A 301-amino-acid polypeptide reads, in one-letter code: Probable protein phosphatase 2C 4 (301 aa).

The segment covering 1–18 has biased composition (polar residues); that stretch reads MGPYLSQPNKNKTTTSGE. A disordered region spans residues 1–20; that stretch reads MGPYLSQPNKNKTTTSGEGK. The PPM-type phosphatase domain maps to 23-298; the sequence is IFAASEMQGW…DNMTTLIIYL (276 aa). Residues D57, G58, D237, and D289 each coordinate Mn(2+).

Belongs to the PP2C family. Mg(2+) is required as a cofactor. It depends on Mn(2+) as a cofactor.

The protein resides in the membrane. The enzyme catalyses O-phospho-L-seryl-[protein] + H2O = L-seryl-[protein] + phosphate. It catalyses the reaction O-phospho-L-threonyl-[protein] + H2O = L-threonyl-[protein] + phosphate. Its function is as follows. Enzyme with a broad specificity. The chain is Probable protein phosphatase 2C 4 from Paramecium tetraurelia.